The sequence spans 102 residues: uncharacterized protein (102 aa).

This is an uncharacterized protein from Saccharomyces cerevisiae (strain ATCC 204508 / S288c) (Baker's yeast).